The primary structure comprises 222 residues: Extracellular protein ARB_03106 (222 aa).

The first 18 residues, 1–18 (MRLHSVLAVATAVGCAVA), serve as a signal peptide directing secretion. N-linked (GlcNAc...) asparagine glycans are attached at residues Asn-113 and Asn-126.

It is found in the secreted. This chain is Extracellular protein ARB_03106, found in Arthroderma benhamiae (strain ATCC MYA-4681 / CBS 112371) (Trichophyton mentagrophytes).